The chain runs to 64 residues: Conotoxin Ts-011 (64 aa).

An N-terminal signal peptide occupies residues 1-22; it reads MHCLPVPVILLLLIASTPSVDA. The propeptide occupies 23 to 51; it reads RPKTKDDVPPASFHGADNANRILRTLWNL. An Isoleucine amide modification is found at isoleucine 63.

This sequence belongs to the conotoxin T superfamily. Post-translationally, contains 2 disulfide bonds that can be either 'C1-C3, C2-C4' or 'C1-C4, C2-C3', since these disulfide connectivities have been observed for conotoxins with cysteine framework V (for examples, see AC P0DQQ7 and AC P81755). As to expression, expressed by the venom duct.

Its subcellular location is the secreted. This is Conotoxin Ts-011 from Conus tessulatus (Tessellate cone).